Consider the following 505-residue polypeptide: T-cell activation inhibitor, mitochondrial (505 aa).

Residues 216 to 243 are a coiled coil; the sequence is LKNSLPLRKELDRLKNELSELLQLSDIR.

As to expression, expressed in peripheral blood leukocytes, mainly in T-lymphocytes.

The protein localises to the mitochondrion. In terms of biological role, may regulate T-cell apoptosis. The sequence is that of T-cell activation inhibitor, mitochondrial (Tcaim) from Rattus norvegicus (Rat).